We begin with the raw amino-acid sequence, 259 residues long: Bisphosphoglycerate mutase (259 aa).

Ser2 bears the N-acetylserine mark. Substrate is bound by residues 10–17 (RHGEGAWN), 23–24 (CS), Arg62, 89–92 (ERHY), Arg100, and 116–117 (RR). His11 (tele-phosphohistidine intermediate) is an active-site residue. The active-site Proton donor/acceptor is Glu89. Thr122 is modified (phosphothreonine). A substrate-binding site is contributed by 189–190 (GN).

Belongs to the phosphoglycerate mutase family. BPG-dependent PGAM subfamily. In terms of assembly, homodimer. Expressed in red blood cells.

It catalyses the reaction (2R)-3-phospho-glyceroyl phosphate = (2R)-2,3-bisphosphoglycerate + H(+). It carries out the reaction (2R)-2-phosphoglycerate = (2R)-3-phosphoglycerate. With respect to regulation, at alkaline pH BPGM favors the synthase reaction; however, at lower pH the phosphatase reaction is dominant. Inhibited by citrate. Functionally, plays a major role in regulating hemoglobin oxygen affinity by controlling the levels of its allosteric effector 2,3-bisphosphoglycerate (2,3-BPG). Also exhibits mutase (EC 5.4.2.11) activity. The chain is Bisphosphoglycerate mutase (BPGM) from Oryctolagus cuniculus (Rabbit).